Here is a 381-residue protein sequence, read N- to C-terminus: MAINIRKTHPLLKIMNHALVDLPAPSNISLWWNFGSLLGLCLIIQILTGLFLAMHYTADISMAFSSVVHICRDVNYGWLIRNIHANGASLFFICIYLHIARGLYYGSYLYKETWNIGVILLFLLMATAFVGYVLPWGQMSFWGATVITNLLSAFPYIGDILVQWIWGGFSVDNATLTRFFAFHFLLPFLILALTVIHLLFLHETGSNNPLGINSNADKISFHPYFSYKDLLGFFIMIFFLATLALFMPNLLGDAENFIPANPLVTPPHIKPEWYFLFAYAILRSIPNKLGGVLALLFSIFILMLVPLLHTSKQRSTIFRPMTQIFFWLLVANFLILTWIGGQPVEQPFMMVGQIASISYFALFLIIMPFAGWCENKILSLN.

The next 4 helical transmembrane spans lie at 34 to 54 (FGSLLGLCLIIQILTGLFLAM), 78 to 99 (WLIRNIHANGASLFFICIYLHI), 114 to 134 (WNIGVILLFLLMATAFVGYVL), and 179 to 199 (FFAFHFLLPFLILALTVIHLL). Heme b contacts are provided by His-84 and His-98. Positions 183 and 197 each coordinate heme b. His-202 is a binding site for a ubiquinone. Helical transmembrane passes span 227–247 (YKDLLGFFIMIFFLATLALFM), 289–309 (LGGVLALLFSIFILMLVPLLH), 321–341 (MTQIFFWLLVANFLILTWIGG), and 348–368 (FMMVGQIASISYFALFLIIMP).

Belongs to the cytochrome b family. As to quaternary structure, the cytochrome bc1 complex contains 3 respiratory subunits (MT-CYB, CYC1 and UQCRFS1), 2 core proteins (UQCRC1 and UQCRC2) and probably 6 low-molecular weight proteins. It depends on heme b as a cofactor.

Its subcellular location is the mitochondrion inner membrane. Component of the ubiquinol-cytochrome c reductase complex (complex III or cytochrome b-c1 complex) that is part of the mitochondrial respiratory chain. The b-c1 complex mediates electron transfer from ubiquinol to cytochrome c. Contributes to the generation of a proton gradient across the mitochondrial membrane that is then used for ATP synthesis. The polypeptide is Cytochrome b (mt-cyb) (Prionace glauca (Blue shark)).